A 1056-amino-acid polypeptide reads, in one-letter code: PH and SEC7 domain-containing protein 4 (1056 aa).

Residues 25–42 (LEPHPGECPRETCSHEDP) are compositionally biased toward basic and acidic residues. Disordered stretches follow at residues 25-71 (LEPH…SGVE), 87-149 (CQEQ…QNRS), 195-239 (LPGD…QWGA), 340-362 (GAPAAPPGHGESEGDRLGPAPSA), 388-533 (VQPW…GDVQ), and 546-581 (LRTPMNSSWLPGSPMPQAQSPEEGQRPPAGDKLANG). Composition is skewed to polar residues over residues 88–99 (QEQTRATDPPES) and 128–137 (NTASPGSPVN). Ser-131, Ser-134, and Ser-143 each carry phosphoserine. The span at 207–220 (ENEDSGEDSSEPEG) shows a compositional bias: acidic residues. The residue at position 413 (Ser-413) is a Phosphoserine. Residues 414-423 (QDRDEREGGH) are compositionally biased toward basic and acidic residues. Positions 438-456 (RSPASSPEPSSPESESRGP) are enriched in low complexity. Phosphoserine occurs at positions 448, 469, and 491. 2 stretches are compositionally biased toward polar residues: residues 466-476 (QEGSPQLQHHS) and 486-502 (DASQSSLLETDGEQPSS). The span at 504–522 (KKKEAGEAPKPGEEVKSEG) shows a compositional bias: basic and acidic residues. Residues 544 to 736 (ENLRTPMNSS…KALYWSIRSE (193 aa)) form the SEC7 domain. A compositionally biased stretch (polar residues) spans 548 to 567 (TPMNSSWLPGSPMPQAQSPE). The region spanning 776 to 892 (PTYKQGILAR…WIARINLAAA (117 aa)) is the PH domain. A coiled-coil region spans residues 921 to 976 (SSLEEQHRSHENCLDAAADDLLDLQRNLPERRGRGRELEEHRLRKEYLEYEKTRYE). The disordered stretch occupies residues 1004–1056 (AGGTREPKLSLKKSHSSPSLHQDEAPTTAKVKRNISERRTYRKIIPKRNRNQL). Phosphoserine is present on residues Ser-1019 and Ser-1022. The segment covering 1043-1056 (TYRKIIPKRNRNQL) has biased composition (basic residues).

As to expression, widely expressed. Highest levels of expression are found in placenta, pancreas, spleen, thymus and peripheral blood.

The protein resides in the cell membrane. The protein localises to the cell projection. It localises to the ruffle membrane. Functionally, guanine nucleotide exchange factor for ARF6 and ARL14/ARF7. Through ARL14 activation, controls the movement of MHC class II-containing vesicles along the actin cytoskeleton in dendritic cells. Involved in membrane recycling. Interacts with several phosphatidylinositol phosphate species, including phosphatidylinositol 3,4-bisphosphate, phosphatidylinositol 3,5-bisphosphate and phosphatidylinositol 4,5-bisphosphate. This is PH and SEC7 domain-containing protein 4 (PSD4) from Homo sapiens (Human).